Here is a 293-residue protein sequence, read N- to C-terminus: Phosphatidylserine decarboxylase proenzyme (293 aa).

Residues aspartate 88, histidine 144, and serine 247 each act as charge relay system; for autoendoproteolytic cleavage activity in the active site. The active-site Schiff-base intermediate with substrate; via pyruvic acid; for decarboxylase activity is the serine 247. Pyruvic acid (Ser); by autocatalysis is present on serine 247.

It belongs to the phosphatidylserine decarboxylase family. PSD-B subfamily. Prokaryotic type I sub-subfamily. Heterodimer of a large membrane-associated beta subunit and a small pyruvoyl-containing alpha subunit. The cofactor is pyruvate. In terms of processing, is synthesized initially as an inactive proenzyme. Formation of the active enzyme involves a self-maturation process in which the active site pyruvoyl group is generated from an internal serine residue via an autocatalytic post-translational modification. Two non-identical subunits are generated from the proenzyme in this reaction, and the pyruvate is formed at the N-terminus of the alpha chain, which is derived from the carboxyl end of the proenzyme. The autoendoproteolytic cleavage occurs by a canonical serine protease mechanism, in which the side chain hydroxyl group of the serine supplies its oxygen atom to form the C-terminus of the beta chain, while the remainder of the serine residue undergoes an oxidative deamination to produce ammonia and the pyruvoyl prosthetic group on the alpha chain. During this reaction, the Ser that is part of the protease active site of the proenzyme becomes the pyruvoyl prosthetic group, which constitutes an essential element of the active site of the mature decarboxylase.

Its subcellular location is the cell membrane. It catalyses the reaction a 1,2-diacyl-sn-glycero-3-phospho-L-serine + H(+) = a 1,2-diacyl-sn-glycero-3-phosphoethanolamine + CO2. The protein operates within phospholipid metabolism; phosphatidylethanolamine biosynthesis; phosphatidylethanolamine from CDP-diacylglycerol: step 2/2. Its function is as follows. Catalyzes the formation of phosphatidylethanolamine (PtdEtn) from phosphatidylserine (PtdSer). This is Phosphatidylserine decarboxylase proenzyme from Xylella fastidiosa (strain M12).